The chain runs to 564 residues: Membrane protein insertase YidC (564 aa).

Residues Val7–Asn24 traverse the membrane as a helical segment. Over residues Lys43–Asp60 the composition is skewed to low complexity. The disordered stretch occupies residues Lys43 to Asp76. A run of 6 helical transmembrane segments spans residues Leu293 to Ala313, Val341 to Ile361, Leu364 to Phe384, Met438 to Val458, Ile483 to Ile503, and Pro524 to Val544.

The protein belongs to the OXA1/ALB3/YidC family. Type 1 subfamily. In terms of assembly, interacts with the Sec translocase complex via SecD. Specifically interacts with transmembrane segments of nascent integral membrane proteins during membrane integration.

Its subcellular location is the cell inner membrane. Required for the insertion and/or proper folding and/or complex formation of integral membrane proteins into the membrane. Involved in integration of membrane proteins that insert both dependently and independently of the Sec translocase complex, as well as at least some lipoproteins. Aids folding of multispanning membrane proteins. The polypeptide is Membrane protein insertase YidC (Janthinobacterium sp. (strain Marseille) (Minibacterium massiliensis)).